Here is a 494-residue protein sequence, read N- to C-terminus: Ketol-acid reductoisomerase (NADP(+)) (494 aa).

A KARI N-terminal Rossmann domain is found at 14-208; sequence LDQLGRCRFM…GGHRAGVLES (195 aa). NADP(+)-binding positions include 45–48, R68, R76, S78, and 108–110; these read CGAQ and DKQ. The active site involves H132. An NADP(+)-binding site is contributed by G158. KARI C-terminal knotted domains are found at residues 209–344 and 345–487; these read SFVA…NYPV and TDVE…MTDM. D217, E221, E389, and E393 together coordinate Mg(2+). Position 414 (S414) interacts with substrate.

It belongs to the ketol-acid reductoisomerase family. Requires Mg(2+) as cofactor.

It carries out the reaction (2R)-2,3-dihydroxy-3-methylbutanoate + NADP(+) = (2S)-2-acetolactate + NADPH + H(+). The catalysed reaction is (2R,3R)-2,3-dihydroxy-3-methylpentanoate + NADP(+) = (S)-2-ethyl-2-hydroxy-3-oxobutanoate + NADPH + H(+). The protein operates within amino-acid biosynthesis; L-isoleucine biosynthesis; L-isoleucine from 2-oxobutanoate: step 2/4. It functions in the pathway amino-acid biosynthesis; L-valine biosynthesis; L-valine from pyruvate: step 2/4. Functionally, involved in the biosynthesis of branched-chain amino acids (BCAA). Catalyzes an alkyl-migration followed by a ketol-acid reduction of (S)-2-acetolactate (S2AL) to yield (R)-2,3-dihydroxy-isovalerate. In the isomerase reaction, S2AL is rearranged via a Mg-dependent methyl migration to produce 3-hydroxy-3-methyl-2-ketobutyrate (HMKB). In the reductase reaction, this 2-ketoacid undergoes a metal-dependent reduction by NADPH to yield (R)-2,3-dihydroxy-isovalerate. This chain is Ketol-acid reductoisomerase (NADP(+)), found in Photobacterium profundum (strain SS9).